The sequence spans 325 residues: Beta-ketoacyl-[acyl-carrier-protein] synthase III (325 aa).

Residues Cys-119 and His-252 contribute to the active site. Residues 253 to 257 are ACP-binding; it reads QANIR. The active site involves Asn-282.

The protein belongs to the thiolase-like superfamily. FabH family. Homodimer.

The protein resides in the cytoplasm. The catalysed reaction is malonyl-[ACP] + acetyl-CoA + H(+) = 3-oxobutanoyl-[ACP] + CO2 + CoA. It participates in lipid metabolism; fatty acid biosynthesis. In terms of biological role, catalyzes the condensation reaction of fatty acid synthesis by the addition to an acyl acceptor of two carbons from malonyl-ACP. Catalyzes the first condensation reaction which initiates fatty acid synthesis and may therefore play a role in governing the total rate of fatty acid production. Possesses both acetoacetyl-ACP synthase and acetyl transacylase activities. Its substrate specificity determines the biosynthesis of branched-chain and/or straight-chain of fatty acids. In Polaromonas sp. (strain JS666 / ATCC BAA-500), this protein is Beta-ketoacyl-[acyl-carrier-protein] synthase III.